The primary structure comprises 510 residues: ATP synthase subunit alpha (510 aa).

169–176 (GDRQTGKT) lines the ATP pocket.

It belongs to the ATPase alpha/beta chains family. F-type ATPases have 2 components, CF(1) - the catalytic core - and CF(0) - the membrane proton channel. CF(1) has five subunits: alpha(3), beta(3), gamma(1), delta(1), epsilon(1). CF(0) has three main subunits: a(1), b(2) and c(9-12). The alpha and beta chains form an alternating ring which encloses part of the gamma chain. CF(1) is attached to CF(0) by a central stalk formed by the gamma and epsilon chains, while a peripheral stalk is formed by the delta and b chains.

It is found in the cell membrane. It catalyses the reaction ATP + H2O + 4 H(+)(in) = ADP + phosphate + 5 H(+)(out). Its function is as follows. Produces ATP from ADP in the presence of a proton gradient across the membrane. The alpha chain is a regulatory subunit. This is ATP synthase subunit alpha from Thermomicrobium roseum (strain ATCC 27502 / DSM 5159 / P-2).